The primary structure comprises 66 residues: Large ribosomal subunit protein bL33c (66 aa).

Belongs to the bacterial ribosomal protein bL33 family.

Its subcellular location is the plastid. The protein resides in the chloroplast. The sequence is that of Large ribosomal subunit protein bL33c from Aethionema cordifolium (Lebanon stonecress).